Consider the following 833-residue polypeptide: Neurogenic locus protein delta (833 aa).

The signal sequence occupies residues Met-1–Val-18. Residues Gln-19–Gln-594 lie on the Extracellular side of the membrane. 2 cysteine pairs are disulfide-bonded: Cys-46–Cys-61 and Cys-68–Cys-82. Residues Asn-98, Asn-137, and Asn-167 are each glycosylated (N-linked (GlcNAc...) asparagine). The 45-residue stretch at Val-182 to Cys-226 folds into the DSL domain. Disulfide bonds link Cys-184–Cys-193, Cys-197–Cys-209, Cys-217–Cys-226, Cys-231–Cys-240, Cys-235–Cys-246, Cys-248–Cys-257, Cys-260–Cys-271, Cys-266–Cys-277, Cys-279–Cys-288, Cys-295–Cys-307, Cys-301–Cys-317, Cys-319–Cys-328, Cys-335–Cys-348, Cys-342–Cys-360, Cys-362–Cys-371, Cys-378–Cys-388, Cys-383–Cys-404, Cys-406–Cys-415, Cys-422–Cys-433, Cys-427–Cys-439, Cys-441–Cys-450, Cys-457–Cys-468, Cys-462–Cys-477, Cys-479–Cys-488, Cys-495–Cys-506, Cys-500–Cys-515, Cys-517–Cys-526, Cys-533–Cys-544, Cys-538–Cys-553, and Cys-555–Cys-564. EGF-like domains lie at His-227 to Asn-258, Leu-256 to Asn-289, Asp-291 to Glu-329, Glu-331 to Glu-372, Lys-374 to Asp-416, and Gln-418 to Glu-451. The EGF-like 7; calcium-binding domain maps to Asn-453 to Ser-489. One can recognise an EGF-like 8 domain in the interval Lys-491 to Ser-527. Positions Asp-529–Asp-565 constitute an EGF-like 9; calcium-binding domain. Residues Val-595–Phe-617 traverse the membrane as a helical segment. The Cytoplasmic segment spans residues Cys-618 to Met-833. Thr-666 bears the Phosphothreonine mark. The tract at residues Gln-743–Glu-773 is disordered. Over residues Gly-754–Gly-763 the composition is skewed to low complexity.

Interacts with Notch (N) via the EGF repeats and the N EGF repeats. Post-translationally, ubiquitinated by Mib, leading to its endocytosis and subsequent degradation. In terms of tissue distribution, detected in all areas with neurogenic abilities, for example the neurogenic ectoderm and the primordia of the sense organs. Later expression is restricted to those cells that have adopted a neural fate.

The protein resides in the membrane. Functionally, acts as a ligand for Notch (N) receptor. Essential for proper differentiation of ectoderm. Delta is required for the correct separation of neural and epidermal cell lineages. Fringe (fng) acts in the Golgi to determine the type of O-linked fucose on the EGF modules in N, altering the ability of N to bind with Delta. O-fut1 also has a role in modulating the interaction. The chain is Neurogenic locus protein delta from Drosophila melanogaster (Fruit fly).